We begin with the raw amino-acid sequence, 302 residues long: uncharacterized protein (302 aa).

A signal peptide spans 1-52 (MLKKLKVVRLLVNHLIYCPSIFMPYSKNMKKKIWNKTSLGALFMLFGTALTA).

The protein belongs to the MG439/MG440 family.

This is an uncharacterized protein from Mycoplasma pneumoniae (strain ATCC 29342 / M129 / Subtype 1) (Mycoplasmoides pneumoniae).